Consider the following 135-residue polypeptide: Ribosome-binding factor A (135 aa).

The protein belongs to the RbfA family. In terms of assembly, monomer. Binds 30S ribosomal subunits, but not 50S ribosomal subunits or 70S ribosomes.

The protein resides in the cytoplasm. One of several proteins that assist in the late maturation steps of the functional core of the 30S ribosomal subunit. Associates with free 30S ribosomal subunits (but not with 30S subunits that are part of 70S ribosomes or polysomes). Required for efficient processing of 16S rRNA. May interact with the 5'-terminal helix region of 16S rRNA. In Rhizobium meliloti (strain 1021) (Ensifer meliloti), this protein is Ribosome-binding factor A.